An 858-amino-acid polypeptide reads, in one-letter code: MESRYQPTAIEEKWQQTWAEVGIDQTPTDRSKPKFYALSMFPYPSGNLHMGHVRNYTITDVIARVRRMQGYRVLHPMGWDAFGLPAENAAIKRGIHPAKWTADNITQMRSELKRLGLSYDWNCELATCSPDYYRWTQWIFLQFYQAGLAYQKEAAVNWDPIDQTVLANEQVDSEGRSWRSGAKVERKLLRQWFLKITDYAEELLQDLDQLTGWPEKVRKLQANWIGKSTGAYLEFPIVGRDEKISVYTTRPDTVYGVSYVVLAPEHPLTLQVTTKKQLKAVKSFIQEVTAASEIERTAEDQPKRGIATGGKAINPFTGAEIPIWIADYVLYEYGTGAVMGVPAHDSRDFKFAQTYQLPIRQVIIPPDPDLNEQPILQEAYTEPGLLINSGEFDGMPSTDAKAAIVAKAEATGWGQARVQYRLRDWLISRQRYWGAPIPVIHCPQCGIVPVPEADLPVVLPDDVQFSGRGPSPLAQLESWVKVNCPTCNTPARRETDTMDTFIDSSWYYLRYPDAQNDQQVFDPAKTNDWLPVDQYVGGIEHAILHLLYSRFFTKVLRDRGLLNFDEPFQRLLTQGMVQGLTYTNPNRSDSSRYIPSNLVDPNDPKDPETGEPLEVSYQTMSKSKYNGVAPEEVINKYGADTARMFILFKAPPEKDLEWDDADVEGQFRFLNRVWRLVTQYPVIEPTTKQGDALAKEEKELRRAIHTAIKEITADLGEEYQLNTAVSELMKLSNALTDASCKDSVIYTEGIETLLLLLAPFAPHISEELWQQLGHTTSVHQQSWPQVDPSALIVDEITIVIQILGKTRGTIQVPASSSREELEEYARQTPVAQRYLEGKTIKKVIVVPGKLVNFVVADA.

Residues P42–H52 carry the 'HIGH' region motif. Positions N584–I594 are enriched in polar residues. Positions N584–E611 are disordered. A 'KMSKS' region motif is present at residues T619–S623. ATP is bound at residue K622.

Belongs to the class-I aminoacyl-tRNA synthetase family.

It is found in the cytoplasm. It carries out the reaction tRNA(Leu) + L-leucine + ATP = L-leucyl-tRNA(Leu) + AMP + diphosphate. This is Leucine--tRNA ligase from Cyanothece sp. (strain PCC 7425 / ATCC 29141).